We begin with the raw amino-acid sequence, 1217 residues long: Inactive disease resistance protein RPS4 (1217 aa).

The 162-residue stretch at 14–175 (PQHQVFINFR…EIVKAVKTAL (162 aa)) folds into the TIR domain. E88 is a catalytic residue. The NB-ARC domain maps to 211–472 (EQRLKDLEEK…FRSQDKDYVE (262 aa)). LRR repeat units lie at residues 260–285 (HALI…LLGE), 436–459 (PNIV…AFLD), 614–636 (LKEV…DFNP), 637–659 (INLV…DKDT), 682–706 (AEKL…MKKM), 708–728 (MLAF…EMNL), 729–749 (ISLK…PLIS), 750–774 (DNIE…KLQR), 796–818 (LKAL…EIDI), 819–842 (SFLN…SVQY), and 861–887 (LSQL…NLQC). The tract at residues 1162–1195 (TEGVDGRVKKKKKTRMDNGRPKKKQRSGRDDNQT) is disordered. A Nuclear localization signal motif is present at residues 1170–1177 (KKKKKTRM).

As to quaternary structure, interacts with EDS1.

The protein localises to the nucleus. It carries out the reaction NAD(+) + H2O = ADP-D-ribose + nicotinamide + H(+). This is Inactive disease resistance protein RPS4 (RPS4) from Arabidopsis thaliana (Mouse-ear cress).